Reading from the N-terminus, the 299-residue chain is Probable lipid kinase YegS (299 aa).

Residues 2-133 form the DAGKc domain; sequence ANFPASLLIL…IDMARVNDKT (132 aa). ATP contacts are provided by residues Thr-40, 66-72, and Thr-95; that span reads GDGTINE. 3 residues coordinate Mg(2+): Leu-215, Asp-218, and Leu-220. Glu-271 (proton acceptor) is an active-site residue.

It belongs to the diacylglycerol/lipid kinase family. YegS lipid kinase subfamily. Mg(2+) is required as a cofactor. Requires Ca(2+) as cofactor.

The protein resides in the cytoplasm. In terms of biological role, probably phosphorylates lipids; the in vivo substrate is unknown. In Salmonella newport (strain SL254), this protein is Probable lipid kinase YegS.